Consider the following 189-residue polypeptide: Ribonuclease HII (189 aa).

The RNase H type-2 domain maps to 1-189 (MIAGVDEAGR…PVRRALNIDC (189 aa)). A divalent metal cation is bound by residues D6, E7, and D98.

Belongs to the RNase HII family. Mn(2+) serves as cofactor. The cofactor is Mg(2+).

The protein localises to the cytoplasm. It catalyses the reaction Endonucleolytic cleavage to 5'-phosphomonoester.. In terms of biological role, endonuclease that specifically degrades the RNA of RNA-DNA hybrids. This chain is Ribonuclease HII, found in Acinetobacter baylyi (strain ATCC 33305 / BD413 / ADP1).